The primary structure comprises 341 residues: Very-long-chain 3-oxoacyl-CoA reductase (341 aa).

Residues 22 to 42 (AIYGFLLAGVAAFAAPIVSTI) traverse the membrane as a helical segment. NADP(+) is bound by residues Leu-67, Asp-123, Asp-131, Asn-150, Tyr-217, Lys-221, Ile-250, and Thr-252. The active-site Proton donor is the Tyr-217. Lys-221 serves as the catalytic Lowers pKa of active site Tyr.

This sequence belongs to the short-chain dehydrogenases/reductases (SDR) family.

Its subcellular location is the endoplasmic reticulum membrane. The enzyme catalyses a very-long-chain (3R)-3-hydroxyacyl-CoA + NADP(+) = a very-long-chain 3-oxoacyl-CoA + NADPH + H(+). It participates in lipid metabolism; fatty acid biosynthesis. Its function is as follows. Component of the microsomal membrane bound fatty acid elongation system, which produces the 26-carbon very long-chain fatty acids (VLCFA) from palmitate. Catalyzes the reduction of the 3-ketoacyl-CoA intermediate that is formed in each cycle of fatty acid elongation. VLCFAs serve as precursors for ceramide and sphingolipids. This Phaeosphaeria nodorum (strain SN15 / ATCC MYA-4574 / FGSC 10173) (Glume blotch fungus) protein is Very-long-chain 3-oxoacyl-CoA reductase.